An 833-amino-acid chain; its full sequence is Leucine--tRNA ligase (833 aa).

A 'HIGH' region motif is present at residues 41-52 (PYPSGAGLHVGH). Residues 610–614 (KMSKS) carry the 'KMSKS' region motif. Lys-613 contributes to the ATP binding site.

This sequence belongs to the class-I aminoacyl-tRNA synthetase family.

It localises to the cytoplasm. It carries out the reaction tRNA(Leu) + L-leucine + ATP = L-leucyl-tRNA(Leu) + AMP + diphosphate. In Streptococcus agalactiae serotype III (strain NEM316), this protein is Leucine--tRNA ligase.